A 398-amino-acid chain; its full sequence is Argininosuccinate synthase (398 aa).

9 to 17 (AYSGGLDTS) provides a ligand contact to ATP. Residue Y85 coordinates L-citrulline. ATP is bound at residue G115. 3 residues coordinate L-aspartate: T117, N121, and D122. N121 is an L-citrulline binding site. Residues R125, S173, E258, and Y270 each coordinate L-citrulline.

This sequence belongs to the argininosuccinate synthase family. Type 1 subfamily. In terms of assembly, homotetramer.

The protein localises to the cytoplasm. It catalyses the reaction L-citrulline + L-aspartate + ATP = 2-(N(omega)-L-arginino)succinate + AMP + diphosphate + H(+). It functions in the pathway amino-acid biosynthesis; L-arginine biosynthesis; L-arginine from L-ornithine and carbamoyl phosphate: step 2/3. This Streptococcus pneumoniae (strain ATCC BAA-255 / R6) protein is Argininosuccinate synthase.